Reading from the N-terminus, the 478-residue chain is uncharacterized protein (478 aa).

The first 19 residues, 1–19 (MKLFPLCLSALVMSTATCA), serve as a signal peptide directing secretion. Over 20 to 214 (SSVEGAIEKV…VPVTLKLQRQ (195 aa)) the chain is Lumenal. The helical transmembrane segment at 215-235 (IFLSFSIVYGLISLWWAIRCI) threads the bilayer. The Cytoplasmic portion of the chain corresponds to 236–240 (CSRTK). Residues 241-261 (LHLVQVCLFCWFSFFILNHPV) traverse the membrane as a helical segment. Over 262-289 (KQRIFSIDNPDEYLVPFVVSCFTYFLGD) the chain is Lumenal. A helical transmembrane segment spans residues 290–310 (GIEYALYSLFITTTVLGFGTI). Residues 311 to 317 (RRTSKKM) are Cytoplasmic-facing. The chain crosses the membrane as a helical span at residues 318-338 (VLFFSLLTCGQAFLVNVAPMV). Topologically, residues 339 to 356 (YPLLYISGSDKACVLRMV) are lumenal. Residues 357–377 (WVFNKFLYLPLITFLGAVLAF) traverse the membrane as a helical segment. Residues 378-391 (RFRLKKASQFDTRW) are Cytoplasmic-facing. Residues 392–412 (NLFALTLAIIILFAFNDLVIF) traverse the membrane as a helical segment. At 413–427 (DKLQKLWKYDDTTLE) the chain is on the lumenal side. Residues 428-448 (YLKIVNGGIKFVAFSILLGPY) form a helical membrane-spanning segment. Topologically, residues 449 to 478 (SKLFAEPKSLQLDDFLGKHDGHKDPSLEKF) are cytoplasmic.

Its subcellular location is the endoplasmic reticulum membrane. The protein localises to the golgi apparatus membrane. This is an uncharacterized protein from Schizosaccharomyces pombe (strain 972 / ATCC 24843) (Fission yeast).